Reading from the N-terminus, the 493-residue chain is MKRQAFSLLSRLNPWQQLLLSAVLVTLAAPAAAQLRAPGTRTQGIFTQQGSQSASQGSTVAPSQPMMGVPQPSSQPRSQLVDEVVAVVNNSVITRRELLDRADEIESQLRAAKREVPPRPDLLGEVLERLVMERVQTQAAQEAGIKVTDQEVDRAIESVAQQNKMSATELRSRVEASGMSWTKYRDELRKQVQVIRLREREVDSKVQVYDGEIDNYLAARNGGQAAASGPTEFNVAQILVRVPEDASDAQKAQLKTKAEGLLKQVQGGADFAELAKANSEAPEASQGGSLGFREIGRLPAVFANAVVDLQPGAVVPEVLESANGFHVVKLVSKRTAAAQPAASDRIAQTQVRHILIRTGPNMPEAEAKRQMATIRDRITHGVDFADAARRYSQDGSASQGGELGWVSPGELVPEFEQAMNRLRPGEISDPVVTQFGVHLIQVENRRETEVSPEKQRDFARAEVREQKLRAAYDDWVRQLRSAAYVEYRINRQR.

The signal sequence occupies residues 1 to 33; sequence MKRQAFSLLSRLNPWQQLLLSAVLVTLAAPAAA. Residues 46–76 form a disordered region; that stretch reads FTQQGSQSASQGSTVAPSQPMMGVPQPSSQP. Over residues 48 to 58 the composition is skewed to low complexity; the sequence is QQGSQSASQGS. 2 consecutive PpiC domains span residues 230 to 332 and 346 to 444; these read PTEF…KLVS and IAQT…QVEN.

It localises to the periplasm. The enzyme catalyses [protein]-peptidylproline (omega=180) = [protein]-peptidylproline (omega=0). Functionally, chaperone involved in the correct folding and assembly of outer membrane proteins. Recognizes specific patterns of aromatic residues and the orientation of their side chains, which are found more frequently in integral outer membrane proteins. May act in both early periplasmic and late outer membrane-associated steps of protein maturation. In Cupriavidus metallidurans (strain ATCC 43123 / DSM 2839 / NBRC 102507 / CH34) (Ralstonia metallidurans), this protein is Chaperone SurA.